Here is a 99-residue protein sequence, read N- to C-terminus: NADH-quinone oxidoreductase subunit K (99 aa).

3 consecutive transmembrane segments (helical) span residues 3-23 (PANY…GVLV), 28-48 (IVVF…LVTF), and 59-79 (IMAF…LAII).

It belongs to the complex I subunit 4L family. NDH-1 is composed of 14 different subunits. Subunits NuoA, H, J, K, L, M, N constitute the membrane sector of the complex.

The protein localises to the cell membrane. The enzyme catalyses a quinone + NADH + 5 H(+)(in) = a quinol + NAD(+) + 4 H(+)(out). In terms of biological role, NDH-1 shuttles electrons from NADH, via FMN and iron-sulfur (Fe-S) centers, to quinones in the respiratory chain. The immediate electron acceptor for the enzyme in this species is believed to be a menaquinone. Couples the redox reaction to proton translocation (for every two electrons transferred, four hydrogen ions are translocated across the cytoplasmic membrane), and thus conserves the redox energy in a proton gradient. The sequence is that of NADH-quinone oxidoreductase subunit K from Frankia casuarinae (strain DSM 45818 / CECT 9043 / HFP020203 / CcI3).